A 124-amino-acid chain; its full sequence is Fluoride-specific ion channel FluC (124 aa).

4 consecutive transmembrane segments (helical) span residues 4–24, 35–55, 60–80, and 100–120; these read VLYI…ISIL, FGTL…YALA, IGPE…TTFS, and LNVL…QQLI. Na(+)-binding residues include Gly-74 and Thr-77.

It belongs to the fluoride channel Fluc/FEX (TC 1.A.43) family.

The protein localises to the cell inner membrane. It catalyses the reaction fluoride(in) = fluoride(out). Its activity is regulated as follows. Na(+) is not transported, but it plays an essential structural role and its presence is essential for fluoride channel function. Its function is as follows. Fluoride-specific ion channel. Important for reducing fluoride concentration in the cell, thus reducing its toxicity. This is Fluoride-specific ion channel FluC from Shewanella amazonensis (strain ATCC BAA-1098 / SB2B).